The primary structure comprises 137 residues: Global transcriptional regulator Spx (137 aa).

An intrachain disulfide couples C10 to C13.

It belongs to the ArsC family. Spx subfamily. As to quaternary structure, interacts with the C-terminal domain of the alpha subunit of the RNAP.

The protein resides in the cytoplasm. Functionally, global transcriptional regulator that plays a key role in stress response and exerts either positive or negative regulation of genes. Acts by interacting with the C-terminal domain of the alpha subunit of the RNA polymerase (RNAP). This interaction can enhance binding of RNAP to the promoter region of target genes and stimulate their transcription, or block interaction of RNAP with activator. This chain is Global transcriptional regulator Spx, found in Streptococcus agalactiae serotype III (strain NEM316).